Here is a 690-residue protein sequence, read N- to C-terminus: Choline transporter-like 1 (690 aa).

A helical transmembrane segment spans residues 23 to 43 (IFWLVLYVVFWIALIVIAVFS). Asn-134 is a glycosylation site (N-linked (GlcNAc...) asparagine). 4 consecutive transmembrane segments (helical) span residues 203 to 223 (LYKA…FSIV), 237 to 259 (WLIC…WSYY), 282 to 302 (ATIY…LVVI), and 334 to 354 (LLAF…VVCL). N-linked (GlcNAc...) asparagine glycosylation is present at Asn-391. 4 helical membrane passes run 415–435 (IYII…QLAI), 464–484 (LGSV…RLIL), 565–585 (FVLF…SILL), and 594–614 (FYMA…HIIL).

Belongs to the CTL (choline transporter-like) family.

The protein resides in the membrane. In Anopheles gambiae (African malaria mosquito), this protein is Choline transporter-like 1.